The sequence spans 231 residues: Ribose-5-phosphate isomerase A (231 aa).

Residues 32–35 (TGST), 85–88 (DGAD), and 98–101 (KGGG) contribute to the substrate site. Glu107 (proton acceptor) is an active-site residue. Substrate is bound at residue Lys125.

The protein belongs to the ribose 5-phosphate isomerase family. As to quaternary structure, homodimer.

The enzyme catalyses aldehydo-D-ribose 5-phosphate = D-ribulose 5-phosphate. It functions in the pathway carbohydrate degradation; pentose phosphate pathway; D-ribose 5-phosphate from D-ribulose 5-phosphate (non-oxidative stage): step 1/1. In terms of biological role, catalyzes the reversible conversion of ribose-5-phosphate to ribulose 5-phosphate. The chain is Ribose-5-phosphate isomerase A from Burkholderia orbicola (strain MC0-3).